Here is a 595-residue protein sequence, read N- to C-terminus: MPACCSWNDVFQYETNKVTRIQSVNYGTIKWILHMTVFSYVSFALMSDKLYQRKEPLISSVHTKVKGVAEVTENVTEGGVTKLVHGIFDTADYTLPLQGNSFFVMTNYLKSEGQEQKLCPEYPSRGKQCHSDQGCIKGWMDPQSKGIQTGRCIPYDQKRKTCEIFAWCPAEEGKEAPRPALLRSAENFTVLIKNNIDFPGHNYTTRNILPGMNISCTFHKTWNPQCPIFRLGDIFQEIGENFTEVAVQGGIMGIEIYWDCNLDSWSHRCQPKYSFRRLDDKYTNESLFPGYNFRYAKYYKENGMEKRTLIKAFGVRFDILVFGTGGKFDIIQLVVYIGSTLSYFGLATVCIDLIINTYASTCCRSRVYPSCKCCEPCAVNEYYYRKKCEPIVEPKPTLKYVSFVDEPHIWMVDQQLLGKSLQDVKGQEVPRPQTDFLELSRLSLSLHHSPPIPGQPEEMQLLQIEAVPRSRDSPDWCQCGNCLPSQLPENRRALEELCCRRKPGQCITTSELFSKIVLSREALQLLLLYQEPLLALEGEAINSKLRHCAYRSYATWRFVSQDMADFAILPSCCRWKIRKEFPKTQGQYSGFKYPY.

At 1–22 the chain is on the cytoplasmic side; that stretch reads MPACCSWNDVFQYETNKVTRIQ. A lipid anchor (S-palmitoyl cysteine) is attached at cysteine 4. A helical membrane pass occupies residues 23–46; the sequence is SVNYGTIKWILHMTVFSYVSFALM. Residues 47 to 328 are Extracellular-facing; the sequence is SDKLYQRKEP…ILVFGTGGKF (282 aa). Residue asparagine 74 is glycosylated (N-linked (GlcNAc...) asparagine). 3 disulfide bridges follow: cysteine 119/cysteine 168, cysteine 129/cysteine 152, and cysteine 135/cysteine 162. An ADP-ribosylarginine modification is found at arginine 125. The N-linked (GlcNAc...) asparagine glycan is linked to asparagine 187. Threonine 189 provides a ligand contact to ATP. N-linked (GlcNAc...) asparagine glycans are attached at residues asparagine 202 and asparagine 213. Cysteine 216 and cysteine 226 form a disulfide bridge. Residue asparagine 241 is glycosylated (N-linked (GlcNAc...) asparagine). A disulfide bridge connects residues cysteine 260 and cysteine 269. Asparagine 284 is a glycosylation site (N-linked (GlcNAc...) asparagine). The ATP site is built by arginine 294 and lysine 311. Residues 329-353 form a helical membrane-spanning segment; sequence DIIQLVVYIGSTLSYFGLATVCIDL. Serine 342 contacts Na(+). Topologically, residues 354–595 are cytoplasmic; the sequence is IINTYASTCC…GQYSGFKYPY (242 aa). Positions 360 to 377 are C-cys anchor; it reads STCCRSRVYPSCKCCEPC. Residues cysteine 362, cysteine 363, cysteine 374, and cysteine 377 are each lipidated (S-palmitoyl cysteine). The segment at 395–595 is cytoplasmic ballast; sequence KPTLKYVSFV…GQYSGFKYPY (201 aa). Residues cysteine 479, cysteine 499, and cysteine 506 each contribute to the Zn(2+) site. The GTP site is built by arginine 546, histidine 547, tyrosine 550, and alanine 567. Cysteine 572 is a Zn(2+) binding site. GTP-binding residues include lysine 583, serine 589, and glycine 590.

It belongs to the P2X receptor family. In terms of assembly, homotrimer. Interacts with LAMA3, ITGB2, ACTB, ACTN4, SVIL, MPP3, HSPA1, HSPCB, HSPA8, PIK230 and PTPRB. Interacts (via C-terminus) with EMP2. Post-translationally, phosphorylation results in its inactivation. In terms of processing, ADP-ribosylation at Arg-125 is necessary and sufficient to activate P2RX7 and gate the channel. Palmitoylation of several cysteines in the C-terminal cytoplasmic tail is required for efficient localization to cell surface. Palmitoylation prevents channel desensitization by physically anchoring the palmitoylated groups to the membrane.

The protein resides in the cell membrane. It carries out the reaction Ca(2+)(in) = Ca(2+)(out). The catalysed reaction is K(+)(in) = K(+)(out). It catalyses the reaction Na(+)(in) = Na(+)(out). Activated by high extracellular ATP levels (0.1-2.5 mM). The synthetic analog 2'(3')-O-(4-benzoylbenzoyl)ATP (BzATP) acts as a potent agonist. Does not undergo desensitization, instead, undergoes a facilitation process where currents progressively increase with repetitive or prolonged agonist application. Palmitoylation prevents channel desensitization. The permeability of the P2RX7 channel is modulated by the amount of cholesterol in the plasma membrane. Functionally, ATP-gated nonselective transmembrane cation channel that requires high millimolar concentrations of ATP for activation. Upon ATP binding, it rapidly opens to allow the influx of small cations Na(+) and Ca(2+), and the K(+) efflux. Also has the ability to form a large pore in the cell membrane, allowing the passage of large cationic molecules. In microglia, may mediate the transmembrane transport of exogenous NADPH. In immune cells, P2RX7 acts as a molecular sensor in pathological inflammatory states by detecting and responding to high local concentrations of extracellar ATP. In microglial cells, P2RX7 activation leads to the release of pro-inflammatory cytokines, such as IL-1beta and IL-18, through the activation of the NLRP3 inflammasome and caspase-1. Cooperates with KCNK6 to activate NLRP3 inflammasome. Activates death pathways leading to apoptosis and autophagy. Activates death pathways leading to pyroptosis. Its function is as follows. Has a higher affinity for ATP, slower deactivation and an increased propensity to form large cation-permeable pores. The sequence is that of P2X purinoceptor 7 (P2rx7) from Rattus norvegicus (Rat).